A 622-amino-acid polypeptide reads, in one-letter code: Cilia- and flagella-associated protein 206 (622 aa).

A disordered region spans residues glutamine 571 to arginine 592.

This sequence belongs to the CFAP206 family.

The protein resides in the cytoplasm. Its subcellular location is the cytoskeleton. It is found in the cilium axoneme. It localises to the cilium basal body. Essential for sperm motility and is involved in the regulation of the beating frequency of motile cilia on the epithelial cells of the respiratory tract. Required for the establishment of radial spokes in sperm flagella. In Macaca fascicularis (Crab-eating macaque), this protein is Cilia- and flagella-associated protein 206.